A 49-amino-acid chain; its full sequence is Large ribosomal subunit protein bL33 (49 aa).

This sequence belongs to the bacterial ribosomal protein bL33 family.

The polypeptide is Large ribosomal subunit protein bL33 (Lactobacillus acidophilus (strain ATCC 700396 / NCK56 / N2 / NCFM)).